A 163-amino-acid chain; its full sequence is Large ribosomal subunit protein uL15 (163 aa).

Basic residues predominate over residues 1 to 29 (MSKKRRQRGSRTHGGGSHKNRRGAGHRGG). Disordered regions lie at residues 1 to 59 (MSKK…KTRR) and 135 to 163 (VADGEAVLSERGEELEAEKDSTDEEDEES). Composition is skewed to basic and acidic residues over residues 33-46 (AGRDKHEFHNHEPL) and 142-154 (LSERGEELEAEKD).

The protein belongs to the universal ribosomal protein uL15 family. As to quaternary structure, part of the 50S ribosomal subunit.

In terms of biological role, binds to the 23S rRNA. This is Large ribosomal subunit protein uL15 from Natronomonas pharaonis (strain ATCC 35678 / DSM 2160 / CIP 103997 / JCM 8858 / NBRC 14720 / NCIMB 2260 / Gabara) (Halobacterium pharaonis).